Consider the following 202-residue polypeptide: Small ribosomal subunit protein uS4 (202 aa).

The tract at residues 22–48 (TGKELARRPYAPGDHGQGRRGKLSEYG) is disordered. Residues 93–154 (RRLDNMVYRL…KSKKLAVITG (62 aa)) enclose the S4 RNA-binding domain.

This sequence belongs to the universal ribosomal protein uS4 family. As to quaternary structure, part of the 30S ribosomal subunit. Contacts protein S5. The interaction surface between S4 and S5 is involved in control of translational fidelity.

In terms of biological role, one of the primary rRNA binding proteins, it binds directly to 16S rRNA where it nucleates assembly of the body of the 30S subunit. With S5 and S12 plays an important role in translational accuracy. This is Small ribosomal subunit protein uS4 from Lactiplantibacillus plantarum (strain ATCC BAA-793 / NCIMB 8826 / WCFS1) (Lactobacillus plantarum).